We begin with the raw amino-acid sequence, 201 residues long: Large ribosomal subunit protein uL4 (201 aa).

Residues 51 to 73 (EVTGSGKKPWRQKGTGRARAGSV) are disordered.

The protein belongs to the universal ribosomal protein uL4 family. Part of the 50S ribosomal subunit.

One of the primary rRNA binding proteins, this protein initially binds near the 5'-end of the 23S rRNA. It is important during the early stages of 50S assembly. It makes multiple contacts with different domains of the 23S rRNA in the assembled 50S subunit and ribosome. In terms of biological role, forms part of the polypeptide exit tunnel. The sequence is that of Large ribosomal subunit protein uL4 from Erwinia tasmaniensis (strain DSM 17950 / CFBP 7177 / CIP 109463 / NCPPB 4357 / Et1/99).